The primary structure comprises 408 residues: Peptidase T (408 aa).

A Zn(2+)-binding site is contributed by H78. The active site involves D80. D141 is a binding site for Zn(2+). The Proton acceptor role is filled by E175. Zn(2+)-binding residues include E176, D198, and H380.

It belongs to the peptidase M20B family. It depends on Zn(2+) as a cofactor.

It localises to the cytoplasm. It carries out the reaction Release of the N-terminal residue from a tripeptide.. Cleaves the N-terminal amino acid of tripeptides. This is Peptidase T from Clostridium botulinum (strain 657 / Type Ba4).